The sequence spans 259 residues: Major cell-binding factor (259 aa).

An N-terminal signal peptide occupies residues 1–26; that stretch reads MVFRKSLLKLAVFALGACVAFSNANA.

This sequence belongs to the bacterial solute-binding protein 3 family.

The protein resides in the cell surface. Its function is as follows. Common antigen and a major cell adherence molecule. Most probably involved, with PEB1C, in a binding-protein-dependent transport system for an amino acid. May be involved in binding to intestinal cells. This is Major cell-binding factor (peb1A) from Campylobacter jejuni subsp. jejuni serotype O:23/36 (strain 81-176).